We begin with the raw amino-acid sequence, 336 residues long: Anthranilate phosphoribosyltransferase (336 aa).

Residues Gly-83, 86–87 (GD), Thr-91, 93–96 (NIST), 111–119 (KHGNRSVSS), and Ser-123 contribute to the 5-phospho-alpha-D-ribose 1-diphosphate site. Gly-83 is an anthranilate binding site. Ser-95 contributes to the Mg(2+) binding site. Asn-114 contributes to the anthranilate binding site. Anthranilate is bound at residue Arg-169. Asp-227 and Glu-228 together coordinate Mg(2+).

It belongs to the anthranilate phosphoribosyltransferase family. Homodimer. The cofactor is Mg(2+).

It carries out the reaction N-(5-phospho-beta-D-ribosyl)anthranilate + diphosphate = 5-phospho-alpha-D-ribose 1-diphosphate + anthranilate. It participates in amino-acid biosynthesis; L-tryptophan biosynthesis; L-tryptophan from chorismate: step 2/5. Its function is as follows. Catalyzes the transfer of the phosphoribosyl group of 5-phosphorylribose-1-pyrophosphate (PRPP) to anthranilate to yield N-(5'-phosphoribosyl)-anthranilate (PRA). This chain is Anthranilate phosphoribosyltransferase, found in Vibrio campbellii (strain ATCC BAA-1116).